A 371-amino-acid polypeptide reads, in one-letter code: 4-hydroxy-3-methylbut-2-en-1-yl diphosphate synthase (flavodoxin) (371 aa).

Residues Cys-270, Cys-273, Cys-305, and Glu-312 each coordinate [4Fe-4S] cluster.

It belongs to the IspG family. Requires [4Fe-4S] cluster as cofactor.

It carries out the reaction (2E)-4-hydroxy-3-methylbut-2-enyl diphosphate + oxidized [flavodoxin] + H2O + 2 H(+) = 2-C-methyl-D-erythritol 2,4-cyclic diphosphate + reduced [flavodoxin]. It participates in isoprenoid biosynthesis; isopentenyl diphosphate biosynthesis via DXP pathway; isopentenyl diphosphate from 1-deoxy-D-xylulose 5-phosphate: step 5/6. Its function is as follows. Converts 2C-methyl-D-erythritol 2,4-cyclodiphosphate (ME-2,4cPP) into 1-hydroxy-2-methyl-2-(E)-butenyl 4-diphosphate. The chain is 4-hydroxy-3-methylbut-2-en-1-yl diphosphate synthase (flavodoxin) from Shewanella sp. (strain ANA-3).